The sequence spans 326 residues: Acetyl-coenzyme A carboxylase carboxyl transferase subunit alpha (326 aa).

Residues 44-298 enclose the CoA carboxyltransferase C-terminal domain; the sequence is QLESRAEQLR…KEALLFHLNT (255 aa).

Belongs to the AccA family. In terms of assembly, acetyl-CoA carboxylase is a heterohexamer composed of biotin carboxyl carrier protein (AccB), biotin carboxylase (AccC) and two subunits each of ACCase subunit alpha (AccA) and ACCase subunit beta (AccD).

It is found in the cytoplasm. It catalyses the reaction N(6)-carboxybiotinyl-L-lysyl-[protein] + acetyl-CoA = N(6)-biotinyl-L-lysyl-[protein] + malonyl-CoA. The protein operates within lipid metabolism; malonyl-CoA biosynthesis; malonyl-CoA from acetyl-CoA: step 1/1. Its function is as follows. Component of the acetyl coenzyme A carboxylase (ACC) complex. First, biotin carboxylase catalyzes the carboxylation of biotin on its carrier protein (BCCP) and then the CO(2) group is transferred by the carboxyltransferase to acetyl-CoA to form malonyl-CoA. The protein is Acetyl-coenzyme A carboxylase carboxyl transferase subunit alpha of Synechocystis sp. (strain ATCC 27184 / PCC 6803 / Kazusa).